We begin with the raw amino-acid sequence, 342 residues long: S-adenosylmethionine:tRNA ribosyltransferase-isomerase (342 aa).

It belongs to the QueA family. Monomer.

It localises to the cytoplasm. It carries out the reaction 7-aminomethyl-7-carbaguanosine(34) in tRNA + S-adenosyl-L-methionine = epoxyqueuosine(34) in tRNA + adenine + L-methionine + 2 H(+). It participates in tRNA modification; tRNA-queuosine biosynthesis. Its function is as follows. Transfers and isomerizes the ribose moiety from AdoMet to the 7-aminomethyl group of 7-deazaguanine (preQ1-tRNA) to give epoxyqueuosine (oQ-tRNA). This is S-adenosylmethionine:tRNA ribosyltransferase-isomerase from Listeria monocytogenes serotype 4a (strain HCC23).